Reading from the N-terminus, the 605-residue chain is Indole-3-acetic acid-amido synthetase GH3.8 (605 aa).

AMP is bound by residues Ser-115, 342–346, Tyr-365, Asp-421, and Arg-440; that span reads MYASS.

This sequence belongs to the IAA-amido conjugating enzyme family. In terms of tissue distribution, expressed in the inner floral organs (lodicules, stamens and carpels) and at lower levels in lemmas and paleas.

Catalyzes the synthesis of indole-3-acetic acid (IAA)-amino acid conjugates, providing a mechanism for the plant to cope with the presence of excessive free auxin. Produces more IAA-Asp levels than IAA-Ala levels in vitro. May participate in the activation of disease resistance by preventing the accumulation of free IAA, which reduces the expression of a group of auxin-responsive genes encoding expansins that control cell wall loosening and expansion. Contributes to late events in stamen and carpel differentiation, and influences floret fertility. The chain is Indole-3-acetic acid-amido synthetase GH3.8 (GH3.8) from Oryza sativa subsp. indica (Rice).